A 232-amino-acid chain; its full sequence is Triosephosphate isomerase (232 aa).

6 to 8 is a binding site for substrate; the sequence is NLK. The active-site Electrophile is the His-91. Glu-158 acts as the Proton acceptor in catalysis. Substrate is bound by residues Gly-164 and Ser-194.

It belongs to the triosephosphate isomerase family. In terms of assembly, homodimer.

The protein resides in the cytoplasm. The enzyme catalyses D-glyceraldehyde 3-phosphate = dihydroxyacetone phosphate. Its pathway is carbohydrate biosynthesis; gluconeogenesis. It participates in carbohydrate degradation; glycolysis; D-glyceraldehyde 3-phosphate from glycerone phosphate: step 1/1. Its function is as follows. Involved in the gluconeogenesis. Catalyzes stereospecifically the conversion of dihydroxyacetone phosphate (DHAP) to D-glyceraldehyde-3-phosphate (G3P). The sequence is that of Triosephosphate isomerase from Campylobacter hominis (strain ATCC BAA-381 / DSM 21671 / CCUG 45161 / LMG 19568 / NCTC 13146 / CH001A).